A 154-amino-acid chain; its full sequence is uncharacterized protein (154 aa).

The disordered stretch occupies residues 1 to 37; sequence MDNLKEKPLSYNINNNNLNNNNNNNNNNNNNNNNINN. Residues 12 to 37 show a composition bias toward low complexity; sequence NINNNNLNNNNNNNNNNNNNNNNINN. N-linked (GlcNAc...) asparagine glycosylation is present at asparagine 82. A helical membrane pass occupies residues 116–136; that stretch reads IIITTIVVLLMIAVSLGLILA. N-linked (GlcNAc...) asparagine glycosylation occurs at asparagine 149.

Its subcellular location is the membrane. This is an uncharacterized protein from Dictyostelium discoideum (Social amoeba).